The sequence spans 309 residues: Ketosamine-3-kinase (309 aa).

Serine 20 is modified (phosphoserine). An ATP-binding site is contributed by 89-91; that stretch reads EHL. Catalysis depends on aspartate 217, which acts as the Proton acceptor.

The protein belongs to the fructosamine kinase family.

It carries out the reaction N(6)-D-ribulosyl-L-lysyl-[protein] + ATP = N(6)-(3-O-phospho-D-ribulosyl)-L-lysyl-[protein] + ADP + H(+). The enzyme catalyses N(6)-(D-psicosyl)-L-lysyl-[protein] + ATP = N(6)-(3-O-phospho-D-psicosyl)-L-lysyl-[protein] + ADP + H(+). Its function is as follows. Ketosamine-3-kinase involved in protein deglycation by mediating phosphorylation of ribuloselysine and psicoselysine on glycated proteins, to generate ribuloselysine-3 phosphate and psicoselysine-3 phosphate, respectively. Ribuloselysine-3 phosphate and psicoselysine-3 phosphate adducts are unstable and decompose under physiological conditions. Not able to phosphorylate fructoselysine. The protein is Ketosamine-3-kinase of Mus musculus (Mouse).